We begin with the raw amino-acid sequence, 576 residues long: Putative export ATP-binding/permease protein RT0691 (576 aa).

Positions 20 to 303 (LIIVMISLLS…IFELLSEIHL (284 aa)) constitute an ABC transmembrane type-1 domain. 6 consecutive transmembrane segments (helical) span residues 21 to 41 (IIVM…GSVF), 61 to 81 (ILYI…RSYF), 135 to 155 (FLSF…LMFF), 158 to 178 (FKLA…LIKF), 242 to 262 (ALFF…IVWI), and 277 to 297 (IISF…IFEL). Residues 336–572 (IEFKNVDFTY…SEIYRNICRE (237 aa)) form the ABC transporter domain. 371-378 (GRSGAGKS) provides a ligand contact to ATP.

This sequence belongs to the ABC transporter superfamily. As to quaternary structure, homodimer.

The protein resides in the cell inner membrane. Functionally, part of an ABC transporter complex. Transmembrane domains (TMD) form a pore in the inner membrane and the ATP-binding domain (NBD) is responsible for energy generation. The protein is Putative export ATP-binding/permease protein RT0691 of Rickettsia typhi (strain ATCC VR-144 / Wilmington).